A 280-amino-acid polypeptide reads, in one-letter code: MLRIENLDKRYKTGDRALKDVSLSIGAGDIVGLIGPSGAGKSTLIRCVNRLVQPTGGSIRLGDTELTRLGGTELRKARRRMGMIFQEFALIERLTVMENVLSGRLGYVGFWASWFRRFPQADVQRAFALLARVGLSEQVDKRADALSGGQRQRVGIARALAQDPELLLIDEPTASLDPKTSRQVMRLITELCAERGLAAIVNIHDVALAQLFLPRIVGLRAGEVVYDGPASGLTPDVLTRIYGEEDWSKTSDEDADSVDAPPRAADLPASLKLDPALARL.

The region spanning 2–246 (LRIENLDKRY…VLTRIYGEED (245 aa)) is the ABC transporter domain. ATP is bound at residue 35–42 (GPSGAGKS). The disordered stretch occupies residues 247 to 266 (WSKTSDEDADSVDAPPRAAD).

It belongs to the ABC transporter superfamily. Phosphonates importer (TC 3.A.1.9.1) family. In terms of assembly, the complex is composed of two ATP-binding proteins (PhnC), two transmembrane proteins (PhnE) and a solute-binding protein (PhnD).

Its subcellular location is the cell inner membrane. The catalysed reaction is phosphonate(out) + ATP + H2O = phosphonate(in) + ADP + phosphate + H(+). Its function is as follows. Part of the ABC transporter complex PhnCDE involved in phosphonates import. Responsible for energy coupling to the transport system. The sequence is that of Phosphonates import ATP-binding protein PhnC 1 from Rhodopseudomonas palustris (strain HaA2).